A 429-amino-acid chain; its full sequence is Aspartate--tRNA(Asp/Asn) ligase (429 aa).

L-aspartate is bound at residue Glu-167. Positions 189-192 (QLYK) are aspartate. Arg-210 contacts L-aspartate. ATP contacts are provided by residues 210–212 (RAE) and Glu-352. Positions 352 and 355 each coordinate Mg(2+). 2 residues coordinate L-aspartate: Ser-355 and Arg-359. 400–403 (GLAR) serves as a coordination point for ATP.

This sequence belongs to the class-II aminoacyl-tRNA synthetase family. Type 2 subfamily. In terms of assembly, homodimer. Mg(2+) is required as a cofactor.

It is found in the cytoplasm. The enzyme catalyses tRNA(Asx) + L-aspartate + ATP = L-aspartyl-tRNA(Asx) + AMP + diphosphate. Functionally, aspartyl-tRNA synthetase with relaxed tRNA specificity since it is able to aspartylate not only its cognate tRNA(Asp) but also tRNA(Asn). Reaction proceeds in two steps: L-aspartate is first activated by ATP to form Asp-AMP and then transferred to the acceptor end of tRNA(Asp/Asn). This is Aspartate--tRNA(Asp/Asn) ligase from Saccharolobus solfataricus (strain ATCC 35092 / DSM 1617 / JCM 11322 / P2) (Sulfolobus solfataricus).